The primary structure comprises 426 residues: AP-1 complex subunit mu-1 (426 aa).

The MHD domain occupies lysine 167–arginine 425.

It belongs to the adaptor complexes medium subunit family. As to quaternary structure, adaptor protein complex 1 (AP-1) is a heterotetramer composed of two large adaptins (gamma-type subunit apl4 and beta-type subunit apl2), a medium adaptin (mu-type subunit apm1) and a small adaptin (sigma-type subunit aps1). AP-1 interacts with clathrin. Interacts with sad1.

It is found in the cytoplasmic vesicle. Its subcellular location is the clathrin-coated vesicle membrane. It localises to the membrane. The protein resides in the clathrin-coated pit. Component of the adaptor complexes which link clathrin to receptors in coated vesicles. Clathrin-associated protein complexes are believed to interact with the cytoplasmic tails of membrane proteins, leading to their selection and concentration. This chain is AP-1 complex subunit mu-1 (apm1), found in Schizosaccharomyces pombe (strain 972 / ATCC 24843) (Fission yeast).